Reading from the N-terminus, the 539-residue chain is uncharacterized protein (539 aa).

It belongs to the transposase 25 family.

This is an uncharacterized protein from Sinorhizobium fredii (strain NBRC 101917 / NGR234).